The following is a 569-amino-acid chain: Dihydroorotate dehydrogenase (quinone), mitochondrial (569 aa).

The N-terminal 23 residues, 1–23 (MISKLKPQFMFLPKKHILSYCRK), are a transit peptide targeting the mitochondrion. A helical membrane pass occupies residues 143–163 (IIFLLFVSLFGLYGFFESYNP). Residues 225-229 (AGFDK) and T249 contribute to the FMN site. Residue K229 participates in substrate binding. Residues 274-278 (NSCGF) and N342 each bind substrate. An FMN-binding site is contributed by N342. The Nucleophile role is filled by S345. N347 lines the substrate pocket. K429 is a binding site for FMN. Substrate is bound at residue 458–459 (NT). FMN is bound by residues 477 to 478 (SG), 505 to 507 (SGG), and 528 to 529 (YS).

It belongs to the dihydroorotate dehydrogenase family. Type 2 subfamily. As to quaternary structure, monomer. The cofactor is FMN.

The protein resides in the mitochondrion inner membrane. It catalyses the reaction (S)-dihydroorotate + a quinone = orotate + a quinol. Its pathway is pyrimidine metabolism; UMP biosynthesis via de novo pathway; orotate from (S)-dihydroorotate (quinone route): step 1/1. Functionally, catalyzes the conversion of dihydroorotate to orotate with quinone as electron acceptor. The protein is Dihydroorotate dehydrogenase (quinone), mitochondrial of Plasmodium falciparum (isolate 3D7).